A 320-amino-acid polypeptide reads, in one-letter code: ATP-dependent 6-phosphofructokinase (320 aa).

Glycine 12 is a binding site for ATP. Residues 22–26 and 55–60 contribute to the ADP site; these read RGVVR and RYSVSD. ATP-binding positions include 73 to 74 and 103 to 106; these read RF and GDGS. Aspartate 104 is a binding site for Mg(2+). Substrate is bound at residue 126-128; it reads TID. The active-site Proton acceptor is the aspartate 128. Residue arginine 155 participates in ADP binding. Substrate is bound by residues arginine 163 and 170–172; that span reads MGR. ADP-binding positions include 186 to 188, lysine 212, and 214 to 216; these read GCE and KKH. Substrate contacts are provided by residues glutamate 223, arginine 244, and 250 to 253; that span reads HIQR.

The protein belongs to the phosphofructokinase type A (PFKA) family. ATP-dependent PFK group I subfamily. Prokaryotic clade 'B1' sub-subfamily. Homotetramer. The cofactor is Mg(2+).

The protein localises to the cytoplasm. It catalyses the reaction beta-D-fructose 6-phosphate + ATP = beta-D-fructose 1,6-bisphosphate + ADP + H(+). Its pathway is carbohydrate degradation; glycolysis; D-glyceraldehyde 3-phosphate and glycerone phosphate from D-glucose: step 3/4. Its activity is regulated as follows. Allosterically activated by ADP and other diphosphonucleosides, and allosterically inhibited by phosphoenolpyruvate. Its function is as follows. Catalyzes the phosphorylation of D-fructose 6-phosphate to fructose 1,6-bisphosphate by ATP, the first committing step of glycolysis. The polypeptide is ATP-dependent 6-phosphofructokinase (Buchnera aphidicola subsp. Schizaphis graminum (strain Sg)).